The chain runs to 315 residues: HTH-type transcriptional regulator TreR (315 aa).

The 55-residue stretch at 5–59 (LTIKDIARLSGVGKSTVSRVLNNESGVSQLTRERVEAVMNQHGFSPSRSARAMRG) folds into the HTH lacI-type domain. A DNA-binding region (H-T-H motif) is located at residues 7–26 (IKDIARLSGVGKSTVSRVLN). Residues 71-77 (RLDSLSE), Gly-126, Arg-147, 187-190 (DVTT), Arg-194, Thr-242, and Tyr-284 each bind alpha,alpha-trehalose 6-phosphate.

In terms of assembly, homodimer.

In terms of biological role, repressor of the treBC operon. It is able to bind trehalose-6-phosphate and trehalose. This is HTH-type transcriptional regulator TreR (treR) from Escherichia coli (strain K12).